The chain runs to 158 residues: MADIQTERAYQKQPTIFQNKKRVLLGETGKEKLPRYYKNIGLGFKTPKEAIEGTYIDKKCPFTGNVSIRGRILSGVVTKMKMQRTIVIRRDYLHYIRKYNRFEKRHKNMSVHLSPCFRDVQIGDIVTVGECRPLSKTVRFNVLKVTKAAGTKKQFQKF.

Residue Ala2 is modified to N-acetylalanine. Arg22 is subject to Citrulline. Residues Lys38, Lys45, and Lys58 each carry the N6-acetyllysine modification. Residue Cys60 is the site of S-palmitoyl cysteine attachment. Ser67 is modified (phosphoserine). At Arg69 the chain carries Omega-N-methylarginine. Ser110 carries the post-translational modification Phosphoserine.

Belongs to the universal ribosomal protein uS17 family. In terms of assembly, component of the small ribosomal subunit. Part of the small subunit (SSU) processome, composed of more than 70 proteins and the RNA chaperone small nucleolar RNA (snoRNA) U3. In terms of processing, citrullinated by PADI4.

Its subcellular location is the cytoplasm. It is found in the nucleus. The protein localises to the nucleolus. Component of the small ribosomal subunit. The ribosome is a large ribonucleoprotein complex responsible for the synthesis of proteins in the cell. Part of the small subunit (SSU) processome, first precursor of the small eukaryotic ribosomal subunit. During the assembly of the SSU processome in the nucleolus, many ribosome biogenesis factors, an RNA chaperone and ribosomal proteins associate with the nascent pre-rRNA and work in concert to generate RNA folding, modifications, rearrangements and cleavage as well as targeted degradation of pre-ribosomal RNA by the RNA exosome. The polypeptide is Small ribosomal subunit protein uS17 (Rps11) (Mus musculus (Mouse)).